The following is a 132-amino-acid chain: Small ribosomal subunit protein uS8c (132 aa).

Belongs to the universal ribosomal protein uS8 family. As to quaternary structure, part of the 30S ribosomal subunit.

The protein resides in the plastid. The protein localises to the chloroplast. One of the primary rRNA binding proteins, it binds directly to 16S rRNA central domain where it helps coordinate assembly of the platform of the 30S subunit. The chain is Small ribosomal subunit protein uS8c (rps8) from Anthoceros angustus (Hornwort).